The sequence spans 103 residues: MADQKIQIRLKAFDCRLIDRSAGEIVETAKRTGAHVRGPIPLPTKIERCTILVSPHADKDARDQYETCTYKRVLYIVDPNDKTVDALMRLELAAGVDVQIKLT.

This sequence belongs to the universal ribosomal protein uS10 family. As to quaternary structure, part of the 30S ribosomal subunit.

In terms of biological role, involved in the binding of tRNA to the ribosomes. In Xylella fastidiosa (strain M12), this protein is Small ribosomal subunit protein uS10.